Consider the following 465-residue polypeptide: FAD-dependent monooxygenase olcE (465 aa).

A helical membrane pass occupies residues 9–29; that stretch reads IIIGGSVAGLTLALSLNKIGI. Residues Glu-35, Gly-49, Arg-108, Asp-308, and Ala-321 each contribute to the FAD site.

Belongs to the paxM FAD-dependent monooxygenase family. FAD serves as cofactor.

Its subcellular location is the membrane. Its pathway is secondary metabolite biosynthesis; terpenoid biosynthesis. Functionally, FAD-dependent monooxygenase; part of the gene cluster that mediates the biosynthesis of 15-deoxyoxalicine B. The first step of the pathway is the synthesis of nicotinyl-CoA from nicotinic acid by the nicotinic acid-CoA ligase olcI. Nicotinyl-CoA is then a substrate of polyketide synthase olcA to produce 4-hydroxy-6-(3-pyridinyl)-2H-pyran-2-one (HPPO) which is further prenylated by the polyprenyl transferase olcH to yield geranylgeranyl-HPPO. Geranylgeranyl pyrophosphate is provided by the cluster-specific geranylgeranyl pyrophosphate synthase olcC. The FAD-dependent monooxygenase olcE catalyzes the epoxidation of geranylgeranyl-HPPO and the terpene cyclase olcD catalyzes the cyclization of the terpenoid component, resulting in the formation of the tricyclic terpene moiety seen in predecaturin E. The cytochrome P450 monooxygenase then catalyzes the allylic oxidation of predecaturin E, which is followed by spirocylization with concomitant loss of one molecule of water to form decaturin E. Decaturin E is the substrate of the cytochrome P450 monooxygenase olcJ which hydroxylates it at the C-29 position to form decaturin F. The short-chain dehydrogenase/reductase olcF may catalyze the oxidation of decaturin F to generate the 29-hydroxyl-27-one intermediate, and subsequent hemiacetal formation probably leads to the formation of decaturin C. The dioxygenase olcK may be a peroxisomal enzyme that catalyzes the hydroxylation of decaturin C into decaturin A once decaturin C is shuttled into the peroxisome by the MFS transporter olcL. Finally the cytochrome P450 monooxygenase olcB catalyzes the oxidative rearrangement to yield 15-deoxyoxalicine B. In the absence of olcJ, decaturin E may be shunted to a pathway in which it is oxidized to a ketone, possibly by olcF, to form decaturin D, which undergoes further allylic oxidation to yield decaturin G. Moreover, in the absence of oclK or oclL, oclB can convert decaturin C into 15-deoxyoxalicine A. This chain is FAD-dependent monooxygenase olcE, found in Penicillium canescens.